The chain runs to 546 residues: Cytochrome P450 monooxygenase gloP (546 aa).

Residues 17–37 form a helical membrane-spanning segment; sequence TLSGGILTFLFIVVIAHFVLT. N189, N413, and N416 each carry an N-linked (GlcNAc...) asparagine glycan. Residue C492 participates in heme binding.

It belongs to the cytochrome P450 family. Heme is required as a cofactor.

Its subcellular location is the membrane. The protein operates within mycotoxin biosynthesis. Its function is as follows. Cytochrome P450 monooxygenase; part of the gene cluster that mediates the biosynthesis of pneumocandins, lipohexapeptides of the echinocandin family that prevent fungal cell wall formation by non-competitive inhibition of beta-1,3-glucan synthase. The 10,12-dimethylmyristoyl side chain is synthesized by the reducing polyketide synthase gloL/GLPKS4. The thioesterase gloN/GLHYD exclusively interacts with gloL/GLPKS4 to maintain turnover of the polyketide side chain. The 10R,12S-dimethylmyristic acid is then transferred to the first thiolation domain of the nonribosomal peptide synthetase gloA/GLNRPS4 by the acyl-AMP ligase gloD/GLligase, followed by its acylation to L-ornithine to trigger elongation of the cyclic hexapeptide. L-ornithine, 4R-hydroxyl-L-proline (generated from L-proline by the dioxygenase gloF/GLOXY2), 3S-hydroxyl-L-homotyrosine (generated by gloG/GLHtyB, gloH/GLHtyA, gloI/GLHtyC, gloJ/GLHtyD and hydroxylated at C-3 by the dioxygenase gloM/GLOXY1), 3R-hydroxyl-L-glutamine (generated from L-glutamine probably by the dioxygenase gloE/GLOXY3) and 3S-hydroxyl-L-proline (generated from L-proline by the dioxygenase gloF/GLOXY2 to yield pneumocandin B0), or 3S-hydroxyl-4S-methyl-L-proline (generated from L-leucine by the dioxygenase gloC/GLOXY4 to yield pneumocandin A0) are sequentially added to the growing chain. The last C domain of gloA/GLNRPS4 is proposed to be responsible for cyclization by condensation to form the peptide bond between L-ornithine and 3S-hydroxyl-4S-methyl-L-proline (for pneumocandin A0) or 3S-hydroxyl-L-proline (for pneumocandin B0). Finally, the subsequent C-4 hydroxylation of 3S-hydroxyl-L-homotyrosine and L-ornithine dihydroxylation at C-4 and C-5 are performed by the cytochrome P450 monooxygenases gloP/GLP450-1 and gloO/GLP450-2, respectively. The protein is Cytochrome P450 monooxygenase gloP of Glarea lozoyensis (strain ATCC 20868 / MF5171).